Here is a 336-residue protein sequence, read N- to C-terminus: Glycerol-3-phosphate dehydrogenase [NAD(P)+] (336 aa).

Positions 16, 17, 37, and 111 each coordinate NADPH. The sn-glycerol 3-phosphate site is built by Lys-111, Gly-140, and Thr-142. Ala-144 contacts NADPH. 5 residues coordinate sn-glycerol 3-phosphate: Lys-196, Asp-249, Ser-259, Arg-260, and Asn-261. Lys-196 serves as the catalytic Proton acceptor. Arg-260 is an NADPH binding site. NADPH is bound by residues Val-284 and Glu-286.

It belongs to the NAD-dependent glycerol-3-phosphate dehydrogenase family.

The protein resides in the cytoplasm. It carries out the reaction sn-glycerol 3-phosphate + NAD(+) = dihydroxyacetone phosphate + NADH + H(+). It catalyses the reaction sn-glycerol 3-phosphate + NADP(+) = dihydroxyacetone phosphate + NADPH + H(+). The protein operates within membrane lipid metabolism; glycerophospholipid metabolism. Catalyzes the reduction of the glycolytic intermediate dihydroxyacetone phosphate (DHAP) to sn-glycerol 3-phosphate (G3P), the key precursor for phospholipid synthesis. The protein is Glycerol-3-phosphate dehydrogenase [NAD(P)+] of Haemophilus ducreyi (strain 35000HP / ATCC 700724).